The primary structure comprises 171 residues: Synaptonemal complex central element protein 2 (171 aa).

A disordered region spans residues 1–52; the sequence is MERHGVAAPPVELKDQEPPAIVESGEHRQSENHEETPGSVAPSASCQLPGPF. The span at 24–36 shows a compositional bias: basic and acidic residues; that stretch reads SGEHRQSENHEET. Coiled-coil stretches lie at residues 52–83 and 118–146; these read FSSL…DHAL and QERL…QTVE.

Belongs to the SYCE family. Homodimer. Found in a complex with SYCP1 and SYCE1. Interacts with SYCP1 and SYCE1. Interacts with SYCE3. Interacts with TEX12. Meiotic cells (at protein level). Expressed in the ovary and testis.

It is found in the nucleus. The protein localises to the chromosome. In terms of biological role, major component of the transverse central element of synaptonemal complexes (SCS), formed between homologous chromosomes during meiotic prophase. Requires SYCP1 in order to be incorporated into the central element. May have a role in the synaptonemal complex assembly, stabilization and recombination. The sequence is that of Synaptonemal complex central element protein 2 (Syce2) from Mus musculus (Mouse).